Reading from the N-terminus, the 1032-residue chain is Protein phosphatase 1 regulatory subunit 12A (1032 aa).

The short motif at 35–38 (KVKF) is the KVKF motif element. ANK repeat units lie at residues 39 to 68 (DDGA…DINY), 72 to 101 (DGLT…NINQ), 105 to 134 (EGWI…HVGA), 138 to 164 (EGDT…RQGV), 198 to 227 (SGGT…DVNI), and 231 to 260 (DGWT…DMET). (3S)-3-hydroxyasparagine; by HIF1AN is present on residues N67 and N100. Residue N226 is modified to (3S)-3-hydroxyasparagine; by HIF1AN. 2 disordered regions span residues 290-553 (LHSE…HRSC) and 588-928 (SSTS…RLEK). Over residues 291–300 (HSEKRDKKSP) the composition is skewed to basic and acidic residues. S299 is modified (phosphoserine). Polar residues predominate over residues 302–316 (IESTANMENNQPQKT). The span at 318 to 340 (KNKETLIIEPEKNASRIESLEQE) shows a compositional bias: basic and acidic residues. The segment covering 357-369 (SEEDEEDDSESEA) has biased composition (acidic residues). Over residues 383–399 (AHTASTQAAPAAVTTPT) the composition is skewed to low complexity. Residues 400–421 (LSSNQGTPTSPVKKFPTSTTKI) show a composition bias toward polar residues. 2 positions are modified to phosphoserine: S422 and S432. Basic and acidic residues predominate over residues 422–432 (SPKEEERKDES). Phosphothreonine is present on T443. S445 is subject to Phosphoserine. Y446 carries the phosphotyrosine modification. Residues 469–480 (RSASSPRLSSSL) show a composition bias toward low complexity. S472 is subject to Phosphoserine; by NUAK1. S473 is subject to Phosphoserine; by CDK1. S477 bears the Phosphoserine mark. Residues 481–491 (DNKEKEKDNKG) show a composition bias toward basic and acidic residues. Phosphoserine is present on residues S507 and S509. A compositionally biased stretch (polar residues) spans 540–551 (NSSINEGSTYHR). The residue at position 601 (S601) is a Phosphoserine. Residues 602–612 (PAGTQSSTSNR) show a composition bias toward polar residues. A compositionally biased stretch (basic and acidic residues) spans 614 to 625 (WAEDSTEKEKDS). S618 carries the phosphoserine modification. A compositionally biased stretch (low complexity) spans 633–661 (LVAPTVVSAAASSTTALTTTTAGTLSSTS). A compositionally biased stretch (basic and acidic residues) spans 674–683 (VRDEESESQR). An interaction with ROCK2 region spans residues 683–866 (RKARSRQARQ…VSFWTQDSDE (184 aa)). Residues 684 to 694 (KARSRQARQSR) are compositionally biased toward basic residues. Phosphoserine; by PKA and PKG; in vitro occurs at positions 693 and 696. At T697 the chain carries Phosphothreonine; by ROCK1, ROCK2, CDC42BP, ZIPK/DAPK3 and RAF1. Basic and acidic residues predominate over residues 719-768 (RTREQENEEKDKEEKEKQDKEKQEEKKESEVSREDEYKQKYSRTYDETYA). Residues 774 to 797 (STSSSSTPSSSSLSTLGSSLYASS) show a composition bias toward low complexity. Positions 798-812 (QLNRPNSLVGITSAY) are enriched in polar residues. A Phosphoserine modification is found at S804. A compositionally biased stretch (basic and acidic residues) spans 816 to 842 (LTKDNEREGEKKEEEKEGEDKSQPKSI). Basic residues predominate over residues 843-854 (RERRRPREKRRS). Residue S854 is modified to Phosphoserine; by ROCK2. 2 positions are modified to phosphoserine: S864 and S873. Residues 869–885 (QERQSDTEDGSSKRDTQ) are compositionally biased toward basic and acidic residues. Residues 886-900 (TDSVSRYDSSSTSSS) are compositionally biased toward low complexity. Phosphoserine occurs at positions 905 and 910. S912 carries the phosphoserine; by NUAK1 modification. The span at 916–928 (LEERKPYGSRLEK) shows a compositional bias: basic and acidic residues. S997 bears the Phosphoserine mark.

As to quaternary structure, PP1 comprises a catalytic subunit, PPP1CA, PPP1CB or PPP1CC, and one or several targeting or regulatory subunits. PPP1R12A mediates binding to myosin. Interacts with ARHA and CIT. Binds PPP1R12B, ROCK1 and IL16. Interacts directly with PRKG1. Non-covalent dimer of 2 dimers; PRKG1-PRKG1 and PPP1R12A-PPP1R12A. Interacts with SMTNL1. Interacts with PPP1CB; the interaction is direct. Interacts (when phosphorylated at Ser-445, Ser-472 and Ser-910) with 14-3-3. Interacts with ROCK1 and ROCK2. Interacts with isoform 1 and isoform 2 of ZIPK/DAPK3. Interacts with RAF1. Interacts with HIF1AN. Interacts with NCKAP1L. Phosphorylated on upon DNA damage, probably by ATM or ATR. Phosphorylated by CIT (Rho-associated kinase). Phosphorylated cooperatively by ROCK1 and CDC42BP on Thr-697. In vitro, phosphorylation of Ser-696 by PKA and PKG appears to prevent phosphorylation of the inhibitory site Thr-697, probably mediated by PRKG1. May be phosphorylated at Thr-697 by DMPK; may inhibit the myosin phosphatase activity. Phosphorylated at Ser-473 by CDK1 during mitosis, creating docking sites for the POLO box domains of PLK1. Subsequently, PLK1 binds and phosphorylates PPP1R12A. Smooth muscle. Detected in aorta, portal vein, stomach, intestine, bladder and lung.

It is found in the cytoplasm. The protein localises to the cytoskeleton. Its subcellular location is the stress fiber. Key regulator of protein phosphatase 1C (PPP1C). Mediates binding to myosin. As part of the PPP1C complex, involved in dephosphorylation of PLK1. Capable of inhibiting HIF1AN-dependent suppression of HIF1A activity. The polypeptide is Protein phosphatase 1 regulatory subunit 12A (Rattus norvegicus (Rat)).